We begin with the raw amino-acid sequence, 48 residues long: MMENSSSETYSLLIAMVTITFGLTGYGLYTAFGPPSKELEDPFEEHED.

The chain crosses the membrane as a helical span at residues 12-34; sequence LLIAMVTITFGLTGYGLYTAFGP.

Belongs to the PsbN family.

It localises to the cellular thylakoid membrane. Its function is as follows. May play a role in photosystem I and II biogenesis. The chain is Protein PsbN from Prochlorococcus marinus (strain MIT 9313).